Consider the following 218-residue polypeptide: MIP18 family protein galla-1 (218 aa).

A disordered region spans residues Met-1 to Glu-59. A compositionally biased stretch (low complexity) spans Ser-12 to Gly-27. Ser-14 carries the phosphoserine modification. Positions Gly-28–Gly-37 are enriched in gly residues. The segment covering Ser-38–Ser-54 has biased composition (low complexity). Residue Ser-65 is modified to Phosphoserine.

The protein belongs to the MIP18 family. In terms of assembly, component of the CGX complex composed of crb, galla (galla-1 or galla-2) and Xpd. Interacts with crb (via intracellular domain). Is not able to interact with Xpd in the absence of crb.

It is found in the apical cell membrane. The protein resides in the cytoplasm. The protein localises to the cytoskeleton. It localises to the spindle. Component of the crb-galla-Xpd (CGX) complex which is essential for proper mitotic chromosome segregation in early embryos. The CGX complex is also required for cell proliferation in developing wing disks. In the CGX complex, acts with crb to recruit Xpd thus forming the functional complex. The protein is MIP18 family protein galla-1 of Drosophila melanogaster (Fruit fly).